The following is a 212-amino-acid chain: Fibrillarin-like rRNA/tRNA 2'-O-methyltransferase (212 aa).

Residues 1–37 (MSEPNLPAGVERREIGGETRLATRGPPVYGEPTADGW) form a disordered region. S-adenosyl-L-methionine contacts are provided by residues 74–75 (TT), 90–91 (EF), 115–116 (DA), and 136–139 (DVAT).

The protein belongs to the methyltransferase superfamily. Fibrillarin family. Interacts with nop5. Component of box C/D small ribonucleoprotein (sRNP) particles that contain rpl7ae, FlpA and nop5, plus a guide RNA.

In terms of biological role, involved in pre-rRNA and tRNA processing. Utilizes the methyl donor S-adenosyl-L-methionine to catalyze the site-specific 2'-hydroxyl methylation of ribose moieties in rRNA and tRNA. Site specificity is provided by a guide RNA that base pairs with the substrate. Methylation occurs at a characteristic distance from the sequence involved in base pairing with the guide RNA. The polypeptide is Fibrillarin-like rRNA/tRNA 2'-O-methyltransferase (Halorubrum lacusprofundi (strain ATCC 49239 / DSM 5036 / JCM 8891 / ACAM 34)).